Consider the following 318-residue polypeptide: MDQNNSLPPYAQGLASPQGAMTPGIPIFSPMMPYGTGLTPQPIQNTNSLSILEEQQREQQQQQQQQQQQQQQAVATAAASVQQSTSQQSTQGASGQTPQLFHSQTLTTAPLPGTTPLYPSPMTPMTPITPATPASESSGIVPQLQNIVSTVNLGCKLDLKTIALRARNAEYNPKRFAAVIMRIREPRTTALIFSSGKMVCTGAKSEEQSRLAARKYARVVQKLGFPAKFLDFKIQNMVGSCDVKFPIRLEGLVLTHQQFSSYEPELFPGLIYRMIKPRIVLLIFVSGKVVLTGAKVRAEIYEAFENIYPILKGFRKTT.

2 disordered regions span residues 1-21 (MDQNNSLPPYAQGLASPQGAM) and 106-138 (LTTAPLPGTTPLYPSPMTPMTPITPATPASESS). Low complexity-rich tracts occupy residues 106–117 (LTTAPLPGTTPL) and 125–135 (MTPITPATPAS). Tandem repeats lie at residues 144-220 (LQNI…ARVV) and 234-311 (IQNM…YPIL). Residues asparagine 146, arginine 182, lysine 197, asparagine 236, and arginine 273 each coordinate DNA.

It belongs to the TBP family. As to quaternary structure, binds DNA as monomer. Belongs to the TFIID complex together with the TBP-associated factors (TAFs). Part of a TFIID-containing RNA polymerase II pre-initiation complex that is composed of TBP and at least GTF2A1, GTF2A2, GTF2E1, GTF2E2, GTF2F1, GTF2H2, GTF2H3, GTF2H4, GTF2H5, GTF2B, TCEA1, ERCC2, ERCC3, TAF1, TAF2, TAF3, TAF4, TAF5, TAF6, TAF7, TAF8, TAF9, TAF10, TAF11, TAF12 and TAF13. Component of the transcription factor SL1/TIF-IB complex, composed of TBP and at least TAF1A, TAF1B, TAF1C and TAF1D. Association of TBP to form either TFIID or SL1/TIF-IB appears to be mutually exclusive. Interacts with TAF1A, TAF1B and TAF1C. Interacts with TFIIB, NCOA6, DRAP1, DR1 and ELF3. Interacts with SPIB, SNAPC1, SNAPC2 and SNAPC4. Interacts with UTF1. Interacts with BRF2; this interaction promotes recruitment of BRF2 to TATA box-containing promoters. Interacts with UBTF. Interacts with GPBP1. Interacts with CITED2. Interacts with ATF7IP. Interacts with LLPH. Interacts with HSF1 (via transactivation domain). Interacts with GTF2B (via C-terminus); this interaction with promoter-bound TBP guides RNA polymerase II into the pre-initiation complex (PIC). Interacts with PAX5. Interacts with MSX1; the interaction may inhibit MSX1 autoinactivation. Interacts with MSX3.

The protein localises to the nucleus. General transcription factor that functions at the core of the DNA-binding multiprotein factor TFIID. Binding of TFIID to the TATA box is the initial transcriptional step of the pre-initiation complex (PIC), playing a role in the activation of eukaryotic genes transcribed by RNA polymerase II. Component of a BRF2-containing transcription factor complex that regulates transcription mediated by RNA polymerase III. Component of the transcription factor SL1/TIF-IB complex, which is involved in the assembly of the PIC (pre-initiation complex) during RNA polymerase I-dependent transcription. The rate of PIC formation probably is primarily dependent on the rate of association of SL1 with the rDNA promoter. SL1 is involved in stabilization of nucleolar transcription factor 1/UBTF on rDNA. The chain is TATA-box-binding protein (TBP) from Mesocricetus auratus (Golden hamster).